A 464-amino-acid polypeptide reads, in one-letter code: Clusterin-like protein 1 (464 aa).

Positions 1-20 are cleaved as a signal peptide; that stretch reads MQPPLFVISVYLLWLKYCDS. The stretch at 56–109 forms a coiled coil; sequence IKQMKIMMERREEEHAKLMKALKKCKEEKQEAQKLMNEVQERLEEEEKLCQASS. Cystine bridges form between C105–C331, C116–C323, C119–C320, C124–C313, and C131–C303. 6 N-linked (GlcNAc...) asparagine glycosylation sites follow: N195, N255, N309, N349, N398, and N429.

It belongs to the clusterin family.

It is found in the secreted. The protein is Clusterin-like protein 1 of Rattus norvegicus (Rat).